Here is a 461-residue protein sequence, read N- to C-terminus: GTPase Der (461 aa).

EngA-type G domains are found at residues 2–166 and 199–370; these read IKVA…PKKP and IKVA…KNYS. GTP is bound by residues 8–15, 57–61, 118–121, 205–212, 252–256, and 316–319; these read GKPNVGKS, DTGGL, NKID, GRVNVGKS, DTAGI, and NKWD. A KH-like domain is found at 371–455; sequence KRIPTATLNK…PIIFVARKKG (85 aa).

This sequence belongs to the TRAFAC class TrmE-Era-EngA-EngB-Septin-like GTPase superfamily. EngA (Der) GTPase family. In terms of assembly, associates with the 50S ribosomal subunit.

GTPase that plays an essential role in the late steps of ribosome biogenesis. The chain is GTPase Der from Nautilia profundicola (strain ATCC BAA-1463 / DSM 18972 / AmH).